A 1386-amino-acid polypeptide reads, in one-letter code: DNA-directed RNA polymerase subunit beta (1386 aa).

The protein belongs to the RNA polymerase beta chain family. In terms of assembly, the RNAP catalytic core consists of 2 alpha, 1 beta, 1 beta' and 1 omega subunit. When a sigma factor is associated with the core the holoenzyme is formed, which can initiate transcription.

The catalysed reaction is RNA(n) + a ribonucleoside 5'-triphosphate = RNA(n+1) + diphosphate. In terms of biological role, DNA-dependent RNA polymerase catalyzes the transcription of DNA into RNA using the four ribonucleoside triphosphates as substrates. The sequence is that of DNA-directed RNA polymerase subunit beta from Nitratiruptor sp. (strain SB155-2).